A 146-amino-acid polypeptide reads, in one-letter code: VQWAAEEKQLITGLWGKVNVADCGAEALARLLIVYPWTQRFFASFGNLSSATAVLGNPMVRAHGKKVLTSFGEAVKNLDNIKNTFAQLSELHCDKLHVDPENFRLLGDILIVVLAAHFGKDFSPDCQAAWQKLVRAVAHALARKYH.

One can recognise a Globin domain in the interval 2 to 146 (QWAAEEKQLI…VAHALARKYH (145 aa)). The heme b site is built by His63 and His92.

It belongs to the globin family. Heterotetramer of two alpha chains and two beta chains. Red blood cells.

In terms of biological role, involved in oxygen transport from the lung to the various peripheral tissues. The chain is Hemoglobin subunit beta (HBB) from Accipiter gentilis (Northern goshawk).